The following is a 104-amino-acid chain: Large ribosomal subunit protein uL24 (104 aa).

It belongs to the universal ribosomal protein uL24 family. In terms of assembly, part of the 50S ribosomal subunit.

In terms of biological role, one of two assembly initiator proteins, it binds directly to the 5'-end of the 23S rRNA, where it nucleates assembly of the 50S subunit. Functionally, one of the proteins that surrounds the polypeptide exit tunnel on the outside of the subunit. This Alteromonas mediterranea (strain DSM 17117 / CIP 110805 / LMG 28347 / Deep ecotype) protein is Large ribosomal subunit protein uL24.